The primary structure comprises 302 residues: tRNA pseudouridine synthase B (302 aa).

Catalysis depends on Asp43, which acts as the Nucleophile.

The protein belongs to the pseudouridine synthase TruB family. Type 1 subfamily.

The catalysed reaction is uridine(55) in tRNA = pseudouridine(55) in tRNA. Its function is as follows. Responsible for synthesis of pseudouridine from uracil-55 in the psi GC loop of transfer RNAs. This is tRNA pseudouridine synthase B from Burkholderia mallei (strain NCTC 10247).